Reading from the N-terminus, the 309-residue chain is UDP-3-O-acyl-N-acetylglucosamine deacetylase (309 aa).

The Zn(2+) site is built by His78, His235, and Asp239. The Proton donor role is filled by His262.

The protein belongs to the LpxC family. Zn(2+) serves as cofactor.

It catalyses the reaction a UDP-3-O-[(3R)-3-hydroxyacyl]-N-acetyl-alpha-D-glucosamine + H2O = a UDP-3-O-[(3R)-3-hydroxyacyl]-alpha-D-glucosamine + acetate. It participates in glycolipid biosynthesis; lipid IV(A) biosynthesis; lipid IV(A) from (3R)-3-hydroxytetradecanoyl-[acyl-carrier-protein] and UDP-N-acetyl-alpha-D-glucosamine: step 2/6. In terms of biological role, catalyzes the hydrolysis of UDP-3-O-myristoyl-N-acetylglucosamine to form UDP-3-O-myristoylglucosamine and acetate, the committed step in lipid A biosynthesis. This Syntrophotalea carbinolica (strain DSM 2380 / NBRC 103641 / GraBd1) (Pelobacter carbinolicus) protein is UDP-3-O-acyl-N-acetylglucosamine deacetylase.